The sequence spans 414 residues: MKGPIKFNALSLQGRSVMSNQSNDTTITQRRDTMNELTEEQKLLMEMVRNLAVREIAPRAIEIDENHSFPVHARDLFADLGLLSPLVPVEYGGTGMDITTFAMVLEEIGKVCASTALMLLAQADGMLSIILDGSPALKEKYLPRFGEKSTLMTAFAATEPGAGSDLLAMKTRAVKKGDKYVINGQKCFITNGSVADILTVWAYTDPSKGAKGMSTFVVERGTPGLIYGHNEKKMGMRGCPNSELFFEDLEVPAENLVGEEGKGFAYLMGALSINRVFCASQAVGIAQGALERAMQHTREREQFGKPIAHLTPIQFMIADMATEVEAARLLVRKATTLLDAKDKRGPLIGGMAKTFASDTAMKVTTDAVQVMGGSGYMQEYQVERMMREAKLTQIYTGTNQITRMVTGRSLLFPS.

Asp124 serves as the catalytic Proton acceptor. 4 residues coordinate FAD: Ala157, Thr158, Ser164, and Thr190. Ser164 serves as a coordination point for cyclohex-1-ene-1-carbonyl-CoA. Ser164 lines the cyclohexa-1,5-diene-1-carbonyl-CoA pocket. Lys211, Arg275, and Thr396 together coordinate cyclohex-1-ene-1-carbonyl-CoA. Lys211, Arg275, and Thr396 together coordinate cyclohexa-1,5-diene-1-carbonyl-CoA. FAD-binding residues include Thr398 and Gln400. Arg408 contributes to the cyclohex-1-ene-1-carbonyl-CoA binding site. Arg408 contacts cyclohexa-1,5-diene-1-carbonyl-CoA.

Belongs to the acyl-CoA dehydrogenase family. In terms of assembly, homotetramer. FAD serves as cofactor.

It catalyses the reaction cyclohex-1-ene-1-carbonyl-CoA + oxidized [electron-transfer flavoprotein] + H(+) = cyclohexa-1,5-diene-1-carbonyl-CoA + reduced [electron-transfer flavoprotein]. Its function is as follows. Mediates the conversion of cyclohex-1-ene-1-carbonyl-CoA (Ch1CoA) into (E)-2-cyclohex-1,5-diene-1-carbonyl-CoA in biosynthesis of cyclohexane-1-carboxylate, a by-product produced during fermentation of benzoate and crotonate to acetate. Also able to further convert (E)-2-cyclohex-1,5-diene-1-carbonyl-CoA to benzoyl-CoA. This chain is Cyclohex-1-ene-1-carbonyl-CoA dehydrogenase, found in Syntrophus aciditrophicus (strain SB).